The sequence spans 410 residues: Peptidase T (410 aa).

Histidine 78 provides a ligand contact to Zn(2+). Aspartate 80 is an active-site residue. Aspartate 140 provides a ligand contact to Zn(2+). Glutamate 174 acts as the Proton acceptor in catalysis. Zn(2+) is bound by residues glutamate 175, aspartate 197, and histidine 379.

This sequence belongs to the peptidase M20B family. Zn(2+) serves as cofactor.

It is found in the cytoplasm. It catalyses the reaction Release of the N-terminal residue from a tripeptide.. Cleaves the N-terminal amino acid of tripeptides. The polypeptide is Peptidase T (Vibrio cholerae serotype O1 (strain ATCC 39315 / El Tor Inaba N16961)).